The sequence spans 149 residues: Transcription antitermination protein NusB (149 aa).

It belongs to the NusB family.

Involved in transcription antitermination. Required for transcription of ribosomal RNA (rRNA) genes. Binds specifically to the boxA antiterminator sequence of the ribosomal RNA (rrn) operons. The chain is Transcription antitermination protein NusB from Sphingopyxis alaskensis (strain DSM 13593 / LMG 18877 / RB2256) (Sphingomonas alaskensis).